The sequence spans 95 residues: Histone-like DNA-binding protein (95 aa).

The protein belongs to the bacterial histone-like protein family.

The sequence is that of Histone-like DNA-binding protein from Rickettsia felis (strain ATCC VR-1525 / URRWXCal2) (Rickettsia azadi).